A 422-amino-acid polypeptide reads, in one-letter code: L-threonine dehydratase biosynthetic IlvA (422 aa).

K60 carries the post-translational modification N6-(pyridoxal phosphate)lysine. Residues N87, 190–194, and S315 each bind pyridoxal 5'-phosphate; that span reads GGGGL. The ACT-like domain maps to 339–413; sequence HYFIVNFPQR…KPFHYVEVNK (75 aa).

Belongs to the serine/threonine dehydratase family. Homotetramer. Pyridoxal 5'-phosphate serves as cofactor.

The enzyme catalyses L-threonine = 2-oxobutanoate + NH4(+). It functions in the pathway amino-acid biosynthesis; L-isoleucine biosynthesis; 2-oxobutanoate from L-threonine: step 1/1. Catalyzes the anaerobic formation of alpha-ketobutyrate and ammonia from threonine in a two-step reaction. The first step involved a dehydration of threonine and a production of enamine intermediates (aminocrotonate), which tautomerizes to its imine form (iminobutyrate). Both intermediates are unstable and short-lived. The second step is the nonenzymatic hydrolysis of the enamine/imine intermediates to form 2-ketobutyrate and free ammonia. In the low water environment of the cell, the second step is accelerated by RidA. The chain is L-threonine dehydratase biosynthetic IlvA (ilvA) from Bacillus subtilis (strain 168).